Reading from the N-terminus, the 349-residue chain is MGNRVICMKKKDVVIRSGGDGSRSKRVNRSQRKLLADEENLHRRALSMAIHQAQVSQRFDGSMSRRIGSTSSRRGTLSDSFSNNKQVPEFLESLKVKKFVLVHGEGFGAWCWYKTIASLEESGLSPVTVDLAGSGFNMTDANSVSTLEEYSKPLIELIQNLPAEEKVILVGHSTGGACVSYALERFPEKISKAIFICATMVTDGQRPFDVFADELGSAERFMKESQFLIYGNGKDNPATGFMFEKQHMKGLYFNQSPNKDIALSMISMRPVPLGPMMEKLSLSAERYGKGRRFYVQTLDDLALSPDVQEKLVRENSPEAVFKIKGSDHCPFFSKPQSLHKILLEIAQIP.

The transit peptide at 1–77 (MGNRVICMKK…GSTSSRRGTL (77 aa)) directs the protein to the chloroplast. The disordered stretch occupies residues 61–80 (GSMSRRIGSTSSRRGTLSDS). Residue Ser-173 is the Acyl-ester intermediate of the active site. Active-site charge relay system residues include Asp-300 and His-328.

This sequence belongs to the AB hydrolase superfamily. Methylesterase family.

The protein resides in the plastid. The protein localises to the chloroplast. In terms of biological role, putative methylesterase. This chain is Putative methylesterase 12, chloroplastic, found in Arabidopsis thaliana (Mouse-ear cress).